The sequence spans 102 residues: Small ribosomal subunit protein uS10 (102 aa).

It belongs to the universal ribosomal protein uS10 family. As to quaternary structure, part of the 30S ribosomal subunit.

Its function is as follows. Involved in the binding of tRNA to the ribosomes. In Bifidobacterium longum (strain DJO10A), this protein is Small ribosomal subunit protein uS10.